The chain runs to 407 residues: Type II secretion system protein L (407 aa).

The Cytoplasmic segment spans residues methionine 1–lysine 257. Residues valine 258–phenylalanine 275 form a helical membrane-spanning segment. At glutamine 276–lysine 407 the chain is on the periplasmic side.

Belongs to the GSP L family. In terms of assembly, type II secretion system is composed of four main components: the outer membrane complex, the inner membrane complex, the cytoplasmic secretion ATPase and the periplasm-spanning pseudopilus. Forms homodimers. Interacts with EpsM/GspM. Interacts with EpsE/GspE and EpsF/GspF.

It is found in the cell inner membrane. Inner membrane component of the type II secretion system required for the energy-dependent secretion of extracellular factors such as proteases and toxins from the periplasm. Plays a role in the complex assembly and recruits EpsM resulting in a stable complex in the inner membrane. Provides thus a link between the energy-providing EpsE protein in the cytoplasm and the rest of the T2SS machinery. The protein is Type II secretion system protein L (epsL) of Vibrio cholerae serotype O1 (strain ATCC 39315 / El Tor Inaba N16961).